The following is a 257-amino-acid chain: UPF0246 protein HAPS_0280 (257 aa).

It belongs to the UPF0246 family.

In Glaesserella parasuis serovar 5 (strain SH0165) (Haemophilus parasuis), this protein is UPF0246 protein HAPS_0280.